The primary structure comprises 200 residues: Small ribosomal subunit protein uS4c (200 aa).

In terms of domain architecture, S4 RNA-binding spans Ile-88–Cys-148.

The protein belongs to the universal ribosomal protein uS4 family. In terms of assembly, part of the 30S ribosomal subunit.

It localises to the plastid. The protein localises to the apicoplast. Its function is as follows. One of the primary rRNA binding proteins, it binds directly to 16S rRNA where it nucleates assembly of the body of the 30S subunit. The polypeptide is Small ribosomal subunit protein uS4c (rps4) (Eimeria tenella (Coccidian parasite)).